An 814-amino-acid chain; its full sequence is Kexin (814 aa).

The N-terminal stretch at 1–19 (MKVRKYITLCFWWAFSTSA) is a signal peptide. Residues 20–109 (LVSSQQIPLK…LFPRNDLFKR (90 aa)) constitute a propeptide that is removed on maturation. N-linked (GlcNAc...) asparagine glycosylation is present at asparagine 42. The propeptide at 110–113 (LPVP) is removed by dipeptidylpeptidase STE13. The Lumenal portion of the chain corresponds to 114 to 678 (APPMDSSLLP…KLSSPRQAMH (565 aa)). Position 135 (aspartate 135) interacts with Ca(2+). A Peptidase S8 domain is found at 141–453 (QWHLVNPSFP…FGKIDAHKLI (313 aa)). N-linked (GlcNAc...) asparagine glycosylation occurs at asparagine 163. Aspartate 175 (charge relay system) is an active-site residue. Aspartate 184 contacts Ca(2+). Histidine 213 (charge relay system) is an active-site residue. The Ca(2+) site is built by asparagine 227, aspartate 277, aspartate 320, and glutamate 350. Intrachain disulfides connect cysteine 230/cysteine 377 and cysteine 322/cysteine 352. Catalysis depends on serine 385, which acts as the Charge relay system. Asparagine 404 and asparagine 480 each carry an N-linked (GlcNAc...) asparagine glycan. The 135-residue stretch at 462–596 (VNAQTWFYLP…RLKLFGESID (135 aa)) folds into the P/Homo B domain. Residues 651–671 (PQTTTASTDPDSDPNTPKKLS) are disordered. A compositionally biased stretch (low complexity) spans 653–667 (TTTASTDPDSDPNTP). The chain crosses the membrane as a helical span at residues 679-699 (YFLTIFLIGATFLVLYFMFFM). The Cytoplasmic segment spans residues 700 to 814 (KSRRRIRRSR…PDVPPSSGRS (115 aa)). A disordered region spans residues 756 to 814 (SLSSSENGDAEHTIDSVLTNENPFSDPIKQKFPNDANAESASNKLQELQPDVPPSSGRS). A compositionally biased stretch (polar residues) spans 792 to 801 (NAESASNKLQ).

It belongs to the peptidase S8 family. Furin subfamily. Requires Ca(2+) as cofactor. Post-translationally, O-glycosylated.

It is found in the golgi apparatus. It localises to the trans-Golgi network membrane. The enzyme catalyses Cleavage of -Lys-Arg-|-Xaa- and -Arg-Arg-|-Xaa- bonds to process yeast alpha-factor pheromone and killer toxin precursors.. Its function is as follows. Processing of precursors of alpha-factors and killer toxin. The chain is Kexin (KEX2) from Saccharomyces cerevisiae (strain ATCC 204508 / S288c) (Baker's yeast).